Consider the following 157-residue polypeptide: Protein Smg (157 aa).

This sequence belongs to the Smg family.

The sequence is that of Protein Smg from Buchnera aphidicola subsp. Schizaphis graminum (strain Sg).